The chain runs to 149 residues: Peptide deformylase (149 aa).

Residues cysteine 92 and histidine 134 each contribute to the Fe cation site. Glutamate 135 is a catalytic residue. Fe cation is bound at residue histidine 138.

This sequence belongs to the polypeptide deformylase family. Fe(2+) serves as cofactor.

It catalyses the reaction N-terminal N-formyl-L-methionyl-[peptide] + H2O = N-terminal L-methionyl-[peptide] + formate. Functionally, removes the formyl group from the N-terminal Met of newly synthesized proteins. Requires at least a dipeptide for an efficient rate of reaction. N-terminal L-methionine is a prerequisite for activity but the enzyme has broad specificity at other positions. The chain is Peptide deformylase from Buchnera aphidicola subsp. Cinara cedri (strain Cc).